The primary structure comprises 45 residues: Large ribosomal subunit protein bL34 (45 aa).

The span at 1–20 (MSKRTYQPNKRKRLKTHGFR) shows a compositional bias: basic residues. Residues 1–45 (MSKRTYQPNKRKRLKTHGFRSRMSTASGRRIISCRRRKNRETLTA) form a disordered region.

This sequence belongs to the bacterial ribosomal protein bL34 family.

The polypeptide is Large ribosomal subunit protein bL34 (Tropheryma whipplei (strain Twist) (Whipple's bacillus)).